The chain runs to 337 residues: tRNA N6-adenosine threonylcarbamoyltransferase (337 aa).

2 residues coordinate Fe cation: H111 and H115. Substrate is bound by residues 134-138 (LVSGG), D167, G180, and N272. D300 provides a ligand contact to Fe cation.

This sequence belongs to the KAE1 / TsaD family. Fe(2+) is required as a cofactor.

The protein resides in the cytoplasm. The catalysed reaction is L-threonylcarbamoyladenylate + adenosine(37) in tRNA = N(6)-L-threonylcarbamoyladenosine(37) in tRNA + AMP + H(+). Functionally, required for the formation of a threonylcarbamoyl group on adenosine at position 37 (t(6)A37) in tRNAs that read codons beginning with adenine. Is involved in the transfer of the threonylcarbamoyl moiety of threonylcarbamoyl-AMP (TC-AMP) to the N6 group of A37, together with TsaE and TsaB. TsaD likely plays a direct catalytic role in this reaction. The sequence is that of tRNA N6-adenosine threonylcarbamoyltransferase from Nitrosomonas europaea (strain ATCC 19718 / CIP 103999 / KCTC 2705 / NBRC 14298).